A 249-amino-acid polypeptide reads, in one-letter code: Pyridoxine 5'-phosphate synthase (249 aa).

Asparagine 12 is a binding site for 3-amino-2-oxopropyl phosphate. Aspartate 14 to histidine 15 serves as a coordination point for 1-deoxy-D-xylulose 5-phosphate. Arginine 23 lines the 3-amino-2-oxopropyl phosphate pocket. Histidine 48 functions as the Proton acceptor in the catalytic mechanism. Positions 50 and 55 each coordinate 1-deoxy-D-xylulose 5-phosphate. Glutamate 75 acts as the Proton acceptor in catalysis. Threonine 105 is a binding site for 1-deoxy-D-xylulose 5-phosphate. The Proton donor role is filled by histidine 199. 3-amino-2-oxopropyl phosphate is bound by residues glycine 200 and glycine 221 to histidine 222.

The protein belongs to the PNP synthase family. Homooctamer; tetramer of dimers.

Its subcellular location is the cytoplasm. It catalyses the reaction 3-amino-2-oxopropyl phosphate + 1-deoxy-D-xylulose 5-phosphate = pyridoxine 5'-phosphate + phosphate + 2 H2O + H(+). It participates in cofactor biosynthesis; pyridoxine 5'-phosphate biosynthesis; pyridoxine 5'-phosphate from D-erythrose 4-phosphate: step 5/5. In terms of biological role, catalyzes the complicated ring closure reaction between the two acyclic compounds 1-deoxy-D-xylulose-5-phosphate (DXP) and 3-amino-2-oxopropyl phosphate (1-amino-acetone-3-phosphate or AAP) to form pyridoxine 5'-phosphate (PNP) and inorganic phosphate. The polypeptide is Pyridoxine 5'-phosphate synthase (Roseobacter denitrificans (strain ATCC 33942 / OCh 114) (Erythrobacter sp. (strain OCh 114))).